A 387-amino-acid polypeptide reads, in one-letter code: Alkanesulfonate monooxygenase (387 aa).

Residues 365 to 387 (HNSGPFGETVGNDYRPSRLASQS) form a disordered region.

It belongs to the SsuD family.

The enzyme catalyses an alkanesulfonate + FMNH2 + O2 = an aldehyde + FMN + sulfite + H2O + 2 H(+). Functionally, catalyzes the desulfonation of aliphatic sulfonates. In Bradyrhizobium diazoefficiens (strain JCM 10833 / BCRC 13528 / IAM 13628 / NBRC 14792 / USDA 110), this protein is Alkanesulfonate monooxygenase.